The sequence spans 174 residues: FMN reductase (NADH) SmoA (174 aa).

Belongs to the non-flavoprotein flavin reductase family.

The enzyme catalyses FMNH2 + NAD(+) = FMN + NADH + 2 H(+). Functionally, part of the sulfoquinovose monooxygenase (sulfo-SMO) pathway, a D-sulfoquinovose degradation pathway that enables the complete utilization of all carbons within sulfoquinovose (SQ) with concomitant production of inorganic sulfite. Catalyzes the NADH-dependent reduction of FMN. FMNH(2) is then transferred to the sulfoquinovose monooxygenase SmoC. This chain is FMN reductase (NADH) SmoA, found in Agrobacterium fabrum (strain C58 / ATCC 33970) (Agrobacterium tumefaciens (strain C58)).